The chain runs to 102 residues: Small ribosomal subunit protein uS10 (102 aa).

The protein belongs to the universal ribosomal protein uS10 family. Part of the 30S ribosomal subunit.

In terms of biological role, involved in the binding of tRNA to the ribosomes. The protein is Small ribosomal subunit protein uS10 of Kosmotoga olearia (strain ATCC BAA-1733 / DSM 21960 / TBF 19.5.1).